A 965-amino-acid polypeptide reads, in one-letter code: 26S proteasome non-ATPase regulatory subunit 1 (965 aa).

8 PC repeats span residues N380–G413, G418–R452, G454–E488, S489–Q523, T560–R595, G630–K664, G665–K706, and G708–S738. A compositionally biased stretch (low complexity) spans A836–A856. Disordered regions lie at residues A836 to P889 and T943 to F965. Over residues E863–P882 the composition is skewed to basic and acidic residues.

The protein belongs to the proteasome subunit S1 family.

Acts as a regulatory subunit of the 26 proteasome which is involved in the ATP-dependent degradation of ubiquitinated proteins. This Caenorhabditis elegans protein is 26S proteasome non-ATPase regulatory subunit 1 (rpn-2).